The primary structure comprises 129 residues: Protein LLP homolog (129 aa).

Over residues 1-21 the composition is skewed to basic residues; sequence MAKSLRSKWKRKMRAEKRKKN. The tract at residues 1-27 is disordered; that stretch reads MAKSLRSKWKRKMRAEKRKKNAPKEAS. Residues lysine 67 and lysine 74 each participate in a glycyl lysine isopeptide (Lys-Gly) (interchain with G-Cter in SUMO2) cross-link. Residues 100–122 are compositionally biased toward basic residues; sequence RQRKRLKAKREKRKGKSKAKAVK. Residues 100-129 are disordered; sequence RQRKRLKAKREKRKGKSKAKAVKVAKGLAW.

It belongs to the learning-associated protein family. As to quaternary structure, interacts with CTCF, MYO1C and with the transcriptional machinery, including RNA polymerase II and TBP.

The protein localises to the nucleus. Its subcellular location is the nucleolus. It localises to the chromosome. In terms of biological role, in hippocampal neurons, regulates dendritic and spine growth and synaptic transmission. This Homo sapiens (Human) protein is Protein LLP homolog (LLPH).